A 438-amino-acid chain; its full sequence is tRNA modification GTPase MnmE (438 aa).

Positions 20, 78, and 117 each coordinate (6S)-5-formyl-5,6,7,8-tetrahydrofolate. Positions G214 to Y359 constitute a TrmE-type G domain. N224 contributes to the K(+) binding site. GTP-binding positions include N224–T229, T243–T249, and D268–G271. Position 228 (S228) interacts with Mg(2+). Residues T243, I245, and T248 each contribute to the K(+) site. T249 serves as a coordination point for Mg(2+). K438 provides a ligand contact to (6S)-5-formyl-5,6,7,8-tetrahydrofolate.

Belongs to the TRAFAC class TrmE-Era-EngA-EngB-Septin-like GTPase superfamily. TrmE GTPase family. Homodimer. Heterotetramer of two MnmE and two MnmG subunits. K(+) is required as a cofactor.

The protein localises to the cytoplasm. Functionally, exhibits a very high intrinsic GTPase hydrolysis rate. Involved in the addition of a carboxymethylaminomethyl (cmnm) group at the wobble position (U34) of certain tRNAs, forming tRNA-cmnm(5)s(2)U34. This chain is tRNA modification GTPase MnmE, found in Ureaplasma parvum serovar 3 (strain ATCC 27815 / 27 / NCTC 11736).